Reading from the N-terminus, the 431-residue chain is Adenylosuccinate synthetase (431 aa).

Residues 21-27 (GDEGKGK) and 49-51 (GHT) each bind GTP. Residue Asp22 is the Proton acceptor of the active site. Asp22 and Gly49 together coordinate Mg(2+). IMP is bound by residues 22-25 (DEGK), 47-50 (NAGH), Thr138, Arg152, Asn230, Thr245, and Arg309. The active-site Proton donor is His50. 305–311 (ATTGRPR) contributes to the substrate binding site. GTP-binding positions include Arg311, 337–339 (KLD), and 419–421 (GNG).

Belongs to the adenylosuccinate synthetase family. In terms of assembly, homodimer. The cofactor is Mg(2+).

It is found in the cytoplasm. It catalyses the reaction IMP + L-aspartate + GTP = N(6)-(1,2-dicarboxyethyl)-AMP + GDP + phosphate + 2 H(+). It participates in purine metabolism; AMP biosynthesis via de novo pathway; AMP from IMP: step 1/2. Its function is as follows. Plays an important role in the de novo pathway and in the salvage pathway of purine nucleotide biosynthesis. Catalyzes the first committed step in the biosynthesis of AMP from IMP. The sequence is that of Adenylosuccinate synthetase from Paramecium tetraurelia.